We begin with the raw amino-acid sequence, 362 residues long: Chorismate synthase (362 aa).

Residues arginine 48 and arginine 54 each coordinate NADP(+). Residues arginine 131 to serine 133, asparagine 243 to alanine 244, glycine 287, lysine 302 to serine 306, and arginine 328 each bind FMN.

It belongs to the chorismate synthase family. As to quaternary structure, homotetramer. FMNH2 serves as cofactor.

It carries out the reaction 5-O-(1-carboxyvinyl)-3-phosphoshikimate = chorismate + phosphate. Its pathway is metabolic intermediate biosynthesis; chorismate biosynthesis; chorismate from D-erythrose 4-phosphate and phosphoenolpyruvate: step 7/7. In terms of biological role, catalyzes the anti-1,4-elimination of the C-3 phosphate and the C-6 proR hydrogen from 5-enolpyruvylshikimate-3-phosphate (EPSP) to yield chorismate, which is the branch point compound that serves as the starting substrate for the three terminal pathways of aromatic amino acid biosynthesis. This reaction introduces a second double bond into the aromatic ring system. This Rhodopseudomonas palustris (strain TIE-1) protein is Chorismate synthase.